Here is a 188-residue protein sequence, read N- to C-terminus: Elongation factor P (188 aa).

Belongs to the elongation factor P family.

It localises to the cytoplasm. The protein operates within protein biosynthesis; polypeptide chain elongation. In terms of biological role, involved in peptide bond synthesis. Stimulates efficient translation and peptide-bond synthesis on native or reconstituted 70S ribosomes in vitro. Probably functions indirectly by altering the affinity of the ribosome for aminoacyl-tRNA, thus increasing their reactivity as acceptors for peptidyl transferase. The chain is Elongation factor P from Rickettsia africae (strain ESF-5).